Reading from the N-terminus, the 246-residue chain is 1-(5-phosphoribosyl)-5-[(5-phosphoribosylamino)methylideneamino] imidazole-4-carboxamide isomerase (246 aa).

D8 acts as the Proton acceptor in catalysis. D130 functions as the Proton donor in the catalytic mechanism.

It belongs to the HisA/HisF family.

It is found in the cytoplasm. The catalysed reaction is 1-(5-phospho-beta-D-ribosyl)-5-[(5-phospho-beta-D-ribosylamino)methylideneamino]imidazole-4-carboxamide = 5-[(5-phospho-1-deoxy-D-ribulos-1-ylimino)methylamino]-1-(5-phospho-beta-D-ribosyl)imidazole-4-carboxamide. The protein operates within amino-acid biosynthesis; L-histidine biosynthesis; L-histidine from 5-phospho-alpha-D-ribose 1-diphosphate: step 4/9. This is 1-(5-phosphoribosyl)-5-[(5-phosphoribosylamino)methylideneamino] imidazole-4-carboxamide isomerase from Shigella dysenteriae serotype 1 (strain Sd197).